A 310-amino-acid chain; its full sequence is tRNA methyltransferase 10 homolog B (310 aa).

Residues 55–94 (RKQRNWERRLEVKKSKRKEEKLRKKLNRQDKDVSDAQLSK) adopt a coiled-coil conformation. One can recognise an SAM-dependent MTase TRM10-type domain in the interval 101-298 (TKERLEGARA…AGIPPGKGFV (198 aa)).

This sequence belongs to the class IV-like SAM-binding methyltransferase superfamily. TRM10 family.

It carries out the reaction guanosine(9) in tRNA + S-adenosyl-L-methionine = N(1)-methylguanosine(9) in tRNA + S-adenosyl-L-homocysteine + H(+). Its function is as follows. S-adenosyl-L-methionine-dependent guanine N(1)-methyltransferase that catalyzes the formation of N(1)-methylguanine at position 9 (m1G9) in tRNAs. Probably not able to catalyze formation of N(1)-methyladenine at position 9 (m1A9) in tRNAs. This chain is tRNA methyltransferase 10 homolog B (trmt10b), found in Danio rerio (Zebrafish).